The sequence spans 723 residues: Beta-xylosidase (723 aa).

The first 19 residues, Met1–Ala19, serve as a signal peptide directing secretion.

Belongs to the glycosyl hydrolase 3 family.

It localises to the periplasm. In terms of biological role, xylosidase involved in ulvan degradation. Ulvan is the main polysaccharide component of the Ulvales (green seaweed) cell wall. It is composed of disaccharide building blocks comprising 3-sulfated rhamnose (Rha3S) linked to D-glucuronic acid (GlcA), L-iduronic acid (IduA), or D-xylose (Xyl). Beta-xylosidase converts Xyl-Rha3S, a product of alpha-L-rhamnosidase acting on Rha-Xyl-Rha3S oligosaccharides, further to Xyl and Rha3S. The enzyme is able to degrade 4-methylumbelliferyl-beta-D-xylopyranoside (MUX) in vitro. The sequence is that of Beta-xylosidase from Formosa agariphila (strain DSM 15362 / KCTC 12365 / LMG 23005 / KMM 3901 / M-2Alg 35-1).